The primary structure comprises 197 residues: Glycerol-3-phosphate acyltransferase (197 aa).

Helical transmembrane passes span 1–21, 50–70, 82–102, 112–132, and 159–179; these read MDFIFPLISYLLGAIPFGLLI, LGFATLLCDSLKGFLPMVLAA, IVCLSGVMGVLGHMFPVYLGF, LGVFLFLSPAAIAISLGVFAA, and GASQLKIITAGFVALLIWIKH.

Belongs to the PlsY family. Probably interacts with PlsX.

It localises to the cell inner membrane. It catalyses the reaction an acyl phosphate + sn-glycerol 3-phosphate = a 1-acyl-sn-glycero-3-phosphate + phosphate. It participates in lipid metabolism; phospholipid metabolism. Functionally, catalyzes the transfer of an acyl group from acyl-phosphate (acyl-PO(4)) to glycerol-3-phosphate (G3P) to form lysophosphatidic acid (LPA). This enzyme utilizes acyl-phosphate as fatty acyl donor, but not acyl-CoA or acyl-ACP. This Desulfotalea psychrophila (strain LSv54 / DSM 12343) protein is Glycerol-3-phosphate acyltransferase.